The sequence spans 213 residues: Large ribosomal subunit protein uL1 (213 aa).

This sequence belongs to the universal ribosomal protein uL1 family.

The protein is Large ribosomal subunit protein uL1 (RPL10A) of Chlamydomonas reinhardtii (Chlamydomonas smithii).